The sequence spans 385 residues: MSANGKISVPEAVVNWLFKVIQPIYNDGRTTFHDSLALLDNFHSLRPRTRVFTHSDGTPQLLLSIYGTISTGEDGSSPHSIPVIMWVPSMYPVKPPFISINLENFDMNTISSSLPIQEYIDSNGWIALPILHCWDPAAMNLIMVVQELMSLLHEPPQDQAPSLPPKPNTQLQQEQNTPPLPPKPKSPHLKPPLPPPPPPQPASNALDLMDMDNTDISPTNHHEMLQNLQTVVNELYREDVDYVADKILTRQTVMQESIARFHEIIAIDKNHLRAVEQAIEQTMHSLNAQIDVLTANRAKVQQFSSTSHVDDEDVNSIAVAKTDGLNQLYNLVAQDYALTDTIECLSRMLHRGTIPLDTFVKQGRELARQQFLVRWHIQRITSPLS.

In terms of domain architecture, UEV spans 12-161; that stretch reads AVVNWLFKVI…LHEPPQDQAP (150 aa). The disordered stretch occupies residues 155-219; that stretch reads PPQDQAPSLP…DMDNTDISPT (65 aa). Residues 168–177 are compositionally biased toward polar residues; it reads NTQLQQEQNT. Positions 178–201 are enriched in pro residues; that stretch reads PPLPPKPKSPHLKPPLPPPPPPQP. A coiled-coil region spans residues 272–300; that stretch reads LRAVEQAIEQTMHSLNAQIDVLTANRAKV. One can recognise an SB domain in the interval 322–385; sequence TDGLNQLYNL…HIQRITSPLS (64 aa).

Belongs to the ubiquitin-conjugating enzyme family. UEV subfamily. Component of the ESCRT-I complex (endosomal sorting complex required for transport I) which consists of STP22, VPS28, SRN2 and MVB12 in a 1:1:1:1 stoichiometry. Interacts with HSE1 and VPS27. Interacts with MVB12 and SRN2.

The protein localises to the cytoplasm. It is found in the endosome. It localises to the late endosome membrane. Component of the ESCRT-I complex, a regulator of vesicular trafficking process. Binds to ubiquitinated cargo proteins and is required for the sorting of endocytic ubiquitinated cargos into multivesicular bodies (MVBs). Mediates the association to the ESCRT-0 complex. Required for vacuolar targeting of temperature-sensitive plasma membrane proteins STE2 and CAN1. This chain is Suppressor protein STP22 of temperature-sensitive alpha-factor receptor and arginine permease (STP22), found in Saccharomyces cerevisiae (strain ATCC 204508 / S288c) (Baker's yeast).